A 426-amino-acid chain; its full sequence is Dihydroorotase (426 aa).

Zn(2+) is bound by residues His58 and His60. Residues 60–62 (HLR) and Asn92 contribute to the substrate site. Asp150, His177, and His230 together coordinate Zn(2+). Asn276 lines the substrate pocket. Residue Asp303 coordinates Zn(2+). Asp303 is a catalytic residue. Residues His307 and 321–322 (FG) contribute to the substrate site.

It belongs to the metallo-dependent hydrolases superfamily. DHOase family. Class I DHOase subfamily. Requires Zn(2+) as cofactor.

The enzyme catalyses (S)-dihydroorotate + H2O = N-carbamoyl-L-aspartate + H(+). Its pathway is pyrimidine metabolism; UMP biosynthesis via de novo pathway; (S)-dihydroorotate from bicarbonate: step 3/3. Functionally, catalyzes the reversible cyclization of carbamoyl aspartate to dihydroorotate. The sequence is that of Dihydroorotase from Listeria monocytogenes serovar 1/2a (strain ATCC BAA-679 / EGD-e).